A 287-amino-acid polypeptide reads, in one-letter code: Lys-63-specific deubiquitinase (287 aa).

One can recognise an MPN domain in the interval 33–176; the sequence is VHLESDAFLV…YTCFQSVQAQ (144 aa). Positions 119, 121, and 132 each coordinate Zn(2+). Positions 119-132 match the JAMM motif motif; it reads HSHPHITVWPSHVD. Residues 256–283 adopt a coiled-coil conformation; sequence LQWLEDRLEQNKQSIITLQKEKELLTQE.

It belongs to the peptidase M67A family. BRCC36 subfamily. Monomer. Homodimer. Component of the BRISC complex, at least composed of abraxas2, brcc3, babam1 and babam2. Interacts with abraxas2; the interaction is direct and may form a heterotetramer. Component of the BRCA1-A complex. Both the BRCA1-A complex and the BRISC complex bind polyubiquitin. It depends on Zn(2+) as a cofactor.

The protein resides in the nucleus. It is found in the cytoplasm. Its subcellular location is the cytoskeleton. It localises to the spindle pole. Metalloprotease that specifically cleaves 'Lys-63'-linked polyubiquitin chains, leaving the last ubiquitin chain attached to its substrates. Catalytic subunit of the BRISC complex, a multiprotein complex that specifically cleaves 'Lys-63'-linked ubiquitin in various substrates; brcc3 does not have activity by itself, but needs to be associated into a higher-order assembly, for minimal in vitro activity. This chain is Lys-63-specific deubiquitinase, found in Danio rerio (Zebrafish).